Consider the following 906-residue polypeptide: Probable dipeptidyl-aminopeptidase B (906 aa).

Residues M1–E11 show a composition bias toward acidic residues. A disordered region spans residues M1 to L33. The Cytoplasmic portion of the chain corresponds to M1 to R85. Over residues P21–L33 the composition is skewed to low complexity. Residues L86–I106 form a helical; Signal-anchor for type II membrane protein membrane-spanning segment. Residues T107–H906 are Vacuolar-facing. N-linked (GlcNAc...) asparagine glycosylation is found at N338 and N629. S743 functions as the Charge relay system in the catalytic mechanism. A glycan (N-linked (GlcNAc...) asparagine) is linked at N797. Residues D820 and H853 each act as charge relay system in the active site.

The protein belongs to the peptidase S9B family.

The protein resides in the vacuole membrane. It catalyses the reaction Release of an N-terminal dipeptide, Xaa-Yaa-|-Zaa-, from a polypeptide, preferentially when Yaa is Pro, provided Zaa is neither Pro nor hydroxyproline.. Its function is as follows. Type IV dipeptidyl-peptidase which removes N-terminal dipeptides sequentially from polypeptides having unsubstituted N-termini provided that the penultimate residue is proline. The protein is Probable dipeptidyl-aminopeptidase B (dapB) of Emericella nidulans (strain FGSC A4 / ATCC 38163 / CBS 112.46 / NRRL 194 / M139) (Aspergillus nidulans).